The chain runs to 231 residues: Adenosylcobinamide-GDP ribazoletransferase (231 aa).

Helical transmembrane passes span 28 to 48, 97 to 117, 121 to 141, 162 to 182, and 209 to 229; these read LWLF…PHFI, TGAG…TLLY, FWEI…LMLL, VFIG…ESLA, and VIGS…TIAG.

It belongs to the CobS family. Mg(2+) serves as cofactor.

It is found in the cell membrane. The enzyme catalyses alpha-ribazole + adenosylcob(III)inamide-GDP = adenosylcob(III)alamin + GMP + H(+). It catalyses the reaction alpha-ribazole 5'-phosphate + adenosylcob(III)inamide-GDP = adenosylcob(III)alamin 5'-phosphate + GMP + H(+). It participates in cofactor biosynthesis; adenosylcobalamin biosynthesis; adenosylcobalamin from cob(II)yrinate a,c-diamide: step 7/7. Joins adenosylcobinamide-GDP and alpha-ribazole to generate adenosylcobalamin (Ado-cobalamin). Also synthesizes adenosylcobalamin 5'-phosphate from adenosylcobinamide-GDP and alpha-ribazole 5'-phosphate. The polypeptide is Adenosylcobinamide-GDP ribazoletransferase (cobS2) (Archaeoglobus fulgidus (strain ATCC 49558 / DSM 4304 / JCM 9628 / NBRC 100126 / VC-16)).